The sequence spans 240 residues: Zinc import ATP-binding protein ZnuC (240 aa).

Residues 1-219 form the ABC transporter domain; the sequence is MSLLSIAALD…PAYRAMFGLD (219 aa). Residue 36–43 participates in ATP binding; the sequence is GPNGSGKT.

Belongs to the ABC transporter superfamily. Zinc importer (TC 3.A.1.15.5) family. As to quaternary structure, the complex is composed of two ATP-binding proteins (ZnuC), two transmembrane proteins (ZnuB) and a solute-binding protein (ZnuA).

It is found in the cell inner membrane. It carries out the reaction Zn(2+)(out) + ATP(in) + H2O(in) = Zn(2+)(in) + ADP(in) + phosphate(in) + H(+)(in). In terms of biological role, part of the ABC transporter complex ZnuABC involved in zinc import. Responsible for energy coupling to the transport system. The sequence is that of Zinc import ATP-binding protein ZnuC from Chromohalobacter salexigens (strain ATCC BAA-138 / DSM 3043 / CIP 106854 / NCIMB 13768 / 1H11).